Here is a 343-residue protein sequence, read N- to C-terminus: Ubiquitin thioesterase OTU1 (343 aa).

The segment at 45 to 123 (RCKAKGGTHV…IVEEDQTRPK (79 aa)) is UBX-like. Residues 144–269 (LTRTAVPADN…GIHYDPLQRN (126 aa)) form the OTU domain. Residues 149 to 155 (VPADNSC) are cys-loop. The active site involves Asp-152. Catalysis depends on Cys-155, which acts as the Nucleophile. Positions 208–218 (IRRDDTWGGAI) are variable-loop. A his-loop region spans residues 258–262 (YDGIH). Ile-261 provides a ligand contact to substrate. Residue His-262 is part of the active site. Residues 286–291 (DIVLVQ) form an S2 site region. A C2H2-type zinc finger spans residues 313-337 (LRCMLCQKGLTGQAEARDHARETGH). His-337 is an active-site residue.

In terms of assembly, interacts with VCP; the interaction is direct. Interacts with FAF2/UBXD8. Interacts with DERL1; however interaction is dependent on the UBAX-like region, suggesting that it may be indirect. Interacts with PLAA, UBXN6 and VCP; may form a complex involved in macroautophagy.

The protein resides in the cytoplasm. It catalyses the reaction Thiol-dependent hydrolysis of ester, thioester, amide, peptide and isopeptide bonds formed by the C-terminal Gly of ubiquitin (a 76-residue protein attached to proteins as an intracellular targeting signal).. Hydrolase that can remove conjugated ubiquitin from proteins and participates in endoplasmic reticulum-associated degradation (ERAD) for misfolded lumenal proteins. May act by triming the ubiquitin chain on the associated substrate to facilitate their threading through the VCP/p97 pore. Ubiquitin moieties on substrates may present a steric impediment to the threading process when the substrate is transferred to the VCP pore and threaded through VCP's axial channel. Mediates deubiquitination of 'Lys-27'-, 'Lys-29'- and 'Lys-33'-linked polyubiquitin chains. Also able to hydrolyze 'Lys-11'-linked ubiquitin chains. Cleaves both polyubiquitin and di-ubiquitin. May play a role in macroautophagy, regulating for instance the clearance of damaged lysosomes. May recruit PLAA, UBXN6 and VCP to damaged lysosome membranes decorated with K48-linked ubiquitin chains and remove these chains allowing autophagosome formation. The chain is Ubiquitin thioesterase OTU1 (Yod1) from Rattus norvegicus (Rat).